The following is a 200-amino-acid chain: Probable gluconokinase (200 aa).

An ATP-binding site is contributed by G34–T41.

It belongs to the gluconokinase GntK/GntV family.

The enzyme catalyses D-gluconate + ATP = 6-phospho-D-gluconate + ADP + H(+). It functions in the pathway carbohydrate acid metabolism; D-gluconate degradation. In Dictyostelium discoideum (Social amoeba), this protein is Probable gluconokinase.